The following is a 366-amino-acid chain: Chorismate synthase (366 aa).

NADP(+)-binding residues include arginine 48 and arginine 54. Residues 125–127 (RSS), 241–242 (NA), glycine 285, 300–304 (KPTSS), and arginine 326 each bind FMN.

It belongs to the chorismate synthase family. Homotetramer. The cofactor is FMNH2.

It carries out the reaction 5-O-(1-carboxyvinyl)-3-phosphoshikimate = chorismate + phosphate. Its pathway is metabolic intermediate biosynthesis; chorismate biosynthesis; chorismate from D-erythrose 4-phosphate and phosphoenolpyruvate: step 7/7. In terms of biological role, catalyzes the anti-1,4-elimination of the C-3 phosphate and the C-6 proR hydrogen from 5-enolpyruvylshikimate-3-phosphate (EPSP) to yield chorismate, which is the branch point compound that serves as the starting substrate for the three terminal pathways of aromatic amino acid biosynthesis. This reaction introduces a second double bond into the aromatic ring system. This Cereibacter sphaeroides (strain ATCC 17023 / DSM 158 / JCM 6121 / CCUG 31486 / LMG 2827 / NBRC 12203 / NCIMB 8253 / ATH 2.4.1.) (Rhodobacter sphaeroides) protein is Chorismate synthase.